Consider the following 501-residue polypeptide: Cytochrome P450 monooxygenase esdpH (501 aa).

A helical transmembrane segment spans residues 5-22 (RVGILIIGVLATATFWLC). Cys-446 provides a ligand contact to heme.

It belongs to the cytochrome P450 family. The cofactor is heme.

Its subcellular location is the membrane. It participates in secondary metabolite biosynthesis; terpenoid biosynthesis. Cytochrome P450 monooxygenase; part of the cluster that mediates the biosynthesis of shearones, diterpenoid pyrones (DPs) which are structurally diverse meroterpenoids consisting of a diterpene linked by a pyrone, and which may exhibit a range of bioactivities. Whitin the pathway, esdpH takes part in the molecular scaffold modification via the hydroxylation at C-6' and can transform shearone C into shearone E, shearone D into shearone F, and shearone H into shearone I, the latter being the final product of the pathway. The molecular scaffold is commonly biosynthesized by a series of enzymes including the non-reducing polyketide synthase (NR-PKS) esdpA that generates an alpha-pyrone; the prenyltransferase esdpC that attaches a geranylgeranyl pyrophosphate (GGPP) produced by the GGPP synthase (GGPPS) esdpD onto the pyrone unit; the FAD-dependent monooxygenase esdpE that converts an olefin on the diterpene unit into an epoxide; and the terpene cyclase esdpB that catalyzes the cyclization reactions to give the molecular backbone shearone A. In the modification steps, esdpF oxidizes the hydroxy group to a ketone at C-3 and esdpG then attaches hydroxy groups at both C-11 and C-12. After that, esdpI hydroxylates at C-20 and esdpH hydroxylates at C-6'. The ether bridge is generated by nucleophilic attack of the hydroxy group at C-20 to the carbonyl carbon at C-3. EsdpH can also functions prior to esdpI. The different combinations of these modification enzymes lead to the production of diverse shearone derivatives, shearone I being the end product of the pathway. The alpha-ketoglutarate-dependent dioxygenase esdpJ seems not to be involved in this pathway. In Penicillium shearii (Eupenicillium shearii), this protein is Cytochrome P450 monooxygenase esdpH.